A 289-amino-acid chain; its full sequence is Dermonecrotic toxin LarSicTox-betaID1 (289 aa).

An N-terminal signal peptide occupies residues 1-2; the sequence is EG. Residues 3–11 constitute a propeptide that is removed on maturation; that stretch reads AEQDGSERT. Histidine 22 is an active-site residue. Mg(2+) contacts are provided by glutamate 42 and aspartate 44. Residue histidine 58 is the Nucleophile of the active site. Intrachain disulfides connect cysteine 62–cysteine 68 and cysteine 64–cysteine 207. Aspartate 102 is a binding site for Mg(2+).

It belongs to the arthropod phospholipase D family. Class II subfamily. Requires Mg(2+) as cofactor. In terms of tissue distribution, expressed by the venom gland.

It localises to the secreted. The catalysed reaction is an N-(acyl)-sphingosylphosphocholine = an N-(acyl)-sphingosyl-1,3-cyclic phosphate + choline. It carries out the reaction N-hexanoyl-sphing-4-enine-1-phosphocholine = N-(hexanoyl)-sphing-4-enine-1,3-cyclic phosphate + choline. It catalyses the reaction N-(dodecanoyl)-sphing-4-enine-1-phosphocholine = N-dodecanoyl-sphing-4-enine-1,3-cyclic phosphate + choline. The enzyme catalyses an N-(acyl)-sphingosylphosphoethanolamine = an N-(acyl)-sphingosyl-1,3-cyclic phosphate + ethanolamine. The catalysed reaction is N-dodecanoyl-heptadecasphing-4-enine-1-phosphoethanolamine = N-dodecanoyl-heptadecasphing-4-enine-1,3-cyclic phosphate + ethanolamine. It carries out the reaction a 1-acyl-sn-glycero-3-phosphocholine = a 1-acyl-sn-glycero-2,3-cyclic phosphate + choline. It catalyses the reaction 1-tetradecanoyl-sn-glycero-3-phosphocholine = 1-tetradecanoyl-sn-glycero-2,3-cyclic phosphate + choline. The enzyme catalyses 1-octanoyl-sn-glycero-3-phosphocholine = 1-octanoyl-sn-glycero-2,3-cyclic phosphate + choline. The catalysed reaction is a 1-acyl-sn-glycero-3-phosphoethanolamine = a 1-acyl-sn-glycero-2,3-cyclic phosphate + ethanolamine. It carries out the reaction 1-tetradecanoyl-sn-glycero-3-phosphoethanolamine = 1-tetradecanoyl-sn-glycero-2,3-cyclic phosphate + ethanolamine. In terms of biological role, dermonecrotic toxins cleave the phosphodiester linkage between the phosphate and headgroup of certain phospholipids (sphingolipid and lysolipid substrates), forming an alcohol (often choline) and a cyclic phosphate. This toxin acts on sphingomyelin (SM) and on ceramide phosphoethanolamine (CPE) with high activity. It also acts on lysophosphatidylcholine (LPC) and on lysophosphatidylethanolamine (LPE) with moderate activity. It is not active on lysophosphatidylserine (LPS), and lysophosphatidylglycerol (LPG). It acts by transphosphatidylation, releasing exclusively cyclic phosphate as second products. It is not surprising that spider toxins have affinity for ethanolamine-containing sphingolipids since they are common in insect prey. On mammals, induces dermonecrosis, hemolysis, increased vascular permeability, edema, inflammatory response, and platelet aggregation. This chain is Dermonecrotic toxin LarSicTox-betaID1, found in Loxosceles arizonica (Arizona brown spider).